The following is an 89-amino-acid chain: Sec-independent protein translocase protein TatA (89 aa).

A helical membrane pass occupies residues 1-21 (MGGISIWQLLIIAVIVVLLFG). The interval 65 to 89 (ADKQADTNQEQAKTEDAKRHDKEQV) is disordered. The segment covering 76-89 (AKTEDAKRHDKEQV) has biased composition (basic and acidic residues).

This sequence belongs to the TatA/E family. In terms of assembly, the Tat system comprises two distinct complexes: a TatABC complex, containing multiple copies of TatA, TatB and TatC subunits, and a separate TatA complex, containing only TatA subunits. Substrates initially bind to the TatABC complex, which probably triggers association of the separate TatA complex to form the active translocon.

The protein localises to the cell inner membrane. In terms of biological role, part of the twin-arginine translocation (Tat) system that transports large folded proteins containing a characteristic twin-arginine motif in their signal peptide across membranes. TatA could form the protein-conducting channel of the Tat system. The chain is Sec-independent protein translocase protein TatA from Shigella flexneri.